The primary structure comprises 242 residues: Segregation and condensation protein A (242 aa).

It belongs to the ScpA family. As to quaternary structure, component of a cohesin-like complex composed of ScpA, ScpB and the Smc homodimer, in which ScpA and ScpB bind to the head domain of Smc. The presence of the three proteins is required for the association of the complex with DNA.

The protein localises to the cytoplasm. Functionally, participates in chromosomal partition during cell division. May act via the formation of a condensin-like complex containing Smc and ScpB that pull DNA away from mid-cell into both cell halves. The sequence is that of Segregation and condensation protein A from Streptococcus pneumoniae serotype 2 (strain D39 / NCTC 7466).